The primary structure comprises 160 residues: Cytochrome b6-f complex subunit 4 (160 aa).

3 helical membrane passes run 36-56 (LLYV…GLAI), 95-115 (LLGV…PFIE), and 131-151 (TVFL…TMPI).

Belongs to the cytochrome b family. PetD subfamily. In terms of assembly, the 4 large subunits of the cytochrome b6-f complex are cytochrome b6, subunit IV (17 kDa polypeptide, petD), cytochrome f and the Rieske protein, while the 4 small subunits are petG, petL, petM and petN. The complex functions as a dimer.

It localises to the plastid. The protein localises to the chloroplast thylakoid membrane. Component of the cytochrome b6-f complex, which mediates electron transfer between photosystem II (PSII) and photosystem I (PSI), cyclic electron flow around PSI, and state transitions. This Pyropia yezoensis (Susabi-nori) protein is Cytochrome b6-f complex subunit 4.